The primary structure comprises 313 residues: Aspartate carbamoyltransferase catalytic subunit (313 aa).

Carbamoyl phosphate contacts are provided by R58 and T59. K86 lines the L-aspartate pocket. Carbamoyl phosphate is bound by residues R108, H136, and Q139. Residues R169 and R223 each coordinate L-aspartate. Carbamoyl phosphate-binding residues include G265 and P266.

This sequence belongs to the aspartate/ornithine carbamoyltransferase superfamily. ATCase family. As to quaternary structure, heterododecamer (2C3:3R2) of six catalytic PyrB chains organized as two trimers (C3), and six regulatory PyrI chains organized as three dimers (R2).

The enzyme catalyses carbamoyl phosphate + L-aspartate = N-carbamoyl-L-aspartate + phosphate + H(+). The protein operates within pyrimidine metabolism; UMP biosynthesis via de novo pathway; (S)-dihydroorotate from bicarbonate: step 2/3. In terms of biological role, catalyzes the condensation of carbamoyl phosphate and aspartate to form carbamoyl aspartate and inorganic phosphate, the committed step in the de novo pyrimidine nucleotide biosynthesis pathway. This Anaeromyxobacter dehalogenans (strain 2CP-1 / ATCC BAA-258) protein is Aspartate carbamoyltransferase catalytic subunit.